Reading from the N-terminus, the 439-residue chain is GTPase Der (439 aa).

EngA-type G domains lie at A2–G168 and I181–T357. GTP is bound by residues G8–S15, D55–V59, N118–E121, G187–S194, D234–L238, and N300–D303. The region spanning T358–R439 is the KH-like domain.

Belongs to the TRAFAC class TrmE-Era-EngA-EngB-Septin-like GTPase superfamily. EngA (Der) GTPase family. As to quaternary structure, associates with the 50S ribosomal subunit.

GTPase that plays an essential role in the late steps of ribosome biogenesis. This is GTPase Der from Thermotoga petrophila (strain ATCC BAA-488 / DSM 13995 / JCM 10881 / RKU-1).